Reading from the N-terminus, the 861-residue chain is MARYNPKDTEPKWRAAWASANTFLTPITPDARPKYYVLEMFPYPSGRIHMGHVRNYAMGDVVARYKRAQGFNVLHPMGWDAFGMPAENAAMERGVHPKGWTYDNIAAMREQLKALGLSIDWSREFATCDPEYYGKQQAWFLHLLKRGLVYRKEASVNWDPVDMTVLANEQVIDGKGWRSGATVEKRKLTQWFLRITDYADALIDGLKTLDRWPEKVRIMQENWIGRSKGLRFTFKFDGEAPAGHADGLEVYTTRPDTLFGASFVGIAPEHPLAEQLAAADPAVAAFVAECRKGGTSEADIEGAEKLGRDTGLRVVHPLDPTLTLPVWIANFILMDYGTGAIFACPAHDQRDLDFARKYDLPVLPVVLPPGEDAATFQVGKEAYVGPGAIFNSEFLDGLDVEAAKTEAVNRIEAMDQGQGATVYRLRDWGVSRQRYWGCPIPVIHCEACGPVGVPEDQLPVVLPDDVAFDKPGNPLLRHPTWRHTTCPSCGGKAERETDTLDTFVDSSWYFARFTDPTAAEPISKAAADHWMPVDQYIGGVEHAVLHLLYARFITRALKDEGLVSVEEPFAGLFTQGMVTHEAYKNAAGEWVEPSDVVIAVEGATRSARHAATGEPITIGDIEKMSKSKKNVVAPEDIFEAYGVDAARLFVMSDSPPERDVQWTNSGVEGSWRFTHRVWNEFESQPAGDFAHDDSDAAAVALRKGAHRLIGFVTDSIEGFRFNSGVARLYEFLNMLKAAPAEGASQGVLAARAEALEILARLISPFTPHLAEEAWAHLGKAGMVVDAPWPKADAALAADDERVLPIQINGKRRGEIKVKAGTAEAEVEKIALADPAVLAHLEGLTVRKVIVVKDRIVNIVAG.

The 'HIGH' region motif lies at 42–52 (PYPSGRIHMGH). Residues 623–627 (KMSKS) carry the 'KMSKS' region motif. K626 contributes to the ATP binding site.

Belongs to the class-I aminoacyl-tRNA synthetase family.

It localises to the cytoplasm. It catalyses the reaction tRNA(Leu) + L-leucine + ATP = L-leucyl-tRNA(Leu) + AMP + diphosphate. The chain is Leucine--tRNA ligase from Caulobacter sp. (strain K31).